A 334-amino-acid chain; its full sequence is Glycerol-3-phosphate dehydrogenase [NAD(P)+] (334 aa).

Trp13, Arg33, and Lys106 together coordinate NADPH. Residues Lys106, Gly137, and Ser139 each contribute to the sn-glycerol 3-phosphate site. Position 141 (Ala141) interacts with NADPH. 5 residues coordinate sn-glycerol 3-phosphate: Lys192, Asp245, Ser255, Arg256, and Asn257. The Proton acceptor role is filled by Lys192. NADPH is bound at residue Arg256. Residues Val280 and Glu282 each coordinate NADPH.

The protein belongs to the NAD-dependent glycerol-3-phosphate dehydrogenase family.

The protein resides in the cytoplasm. It carries out the reaction sn-glycerol 3-phosphate + NAD(+) = dihydroxyacetone phosphate + NADH + H(+). The catalysed reaction is sn-glycerol 3-phosphate + NADP(+) = dihydroxyacetone phosphate + NADPH + H(+). Its pathway is membrane lipid metabolism; glycerophospholipid metabolism. Catalyzes the reduction of the glycolytic intermediate dihydroxyacetone phosphate (DHAP) to sn-glycerol 3-phosphate (G3P), the key precursor for phospholipid synthesis. This is Glycerol-3-phosphate dehydrogenase [NAD(P)+] from Chlamydia muridarum (strain MoPn / Nigg).